Consider the following 475-residue polypeptide: Siroheme synthase (475 aa).

Positions 1–204 (MDYLPVFLNI…GRDQAAQDYL (204 aa)) are precorrin-2 dehydrogenase /sirohydrochlorin ferrochelatase. Residues 22–23 (EI) and 43–44 (PA) each bind NAD(+). The residue at position 129 (serine 129) is a Phosphoserine. The interval 218–475 (GEVYLVGAGP…MGTSSGPGYP (258 aa)) is uroporphyrinogen-III C-methyltransferase. Proline 227 contributes to the S-adenosyl-L-methionine binding site. Aspartate 250 acts as the Proton acceptor in catalysis. Residue lysine 272 is the Proton donor of the active site. Residues 303–305 (GGD), isoleucine 308, 333–334 (TA), methionine 385, and glycine 414 contribute to the S-adenosyl-L-methionine site.

It in the N-terminal section; belongs to the precorrin-2 dehydrogenase / sirohydrochlorin ferrochelatase family. This sequence in the C-terminal section; belongs to the precorrin methyltransferase family.

The catalysed reaction is uroporphyrinogen III + 2 S-adenosyl-L-methionine = precorrin-2 + 2 S-adenosyl-L-homocysteine + H(+). It catalyses the reaction precorrin-2 + NAD(+) = sirohydrochlorin + NADH + 2 H(+). The enzyme catalyses siroheme + 2 H(+) = sirohydrochlorin + Fe(2+). It participates in cofactor biosynthesis; adenosylcobalamin biosynthesis; precorrin-2 from uroporphyrinogen III: step 1/1. Its pathway is cofactor biosynthesis; adenosylcobalamin biosynthesis; sirohydrochlorin from precorrin-2: step 1/1. The protein operates within porphyrin-containing compound metabolism; siroheme biosynthesis; precorrin-2 from uroporphyrinogen III: step 1/1. It functions in the pathway porphyrin-containing compound metabolism; siroheme biosynthesis; siroheme from sirohydrochlorin: step 1/1. It participates in porphyrin-containing compound metabolism; siroheme biosynthesis; sirohydrochlorin from precorrin-2: step 1/1. Functionally, multifunctional enzyme that catalyzes the SAM-dependent methylations of uroporphyrinogen III at position C-2 and C-7 to form precorrin-2 via precorrin-1. Then it catalyzes the NAD-dependent ring dehydrogenation of precorrin-2 to yield sirohydrochlorin. Finally, it catalyzes the ferrochelation of sirohydrochlorin to yield siroheme. The chain is Siroheme synthase from Nitrosomonas europaea (strain ATCC 19718 / CIP 103999 / KCTC 2705 / NBRC 14298).